A 44-amino-acid chain; its full sequence is U17-ctenitoxin-Co1a (44 aa).

Cystine bridges form between Cys3–Cys20, Cys10–Cys26, Cys19–Cys40, and Cys28–Cys38.

Expressed by the venom gland.

Its subcellular location is the secreted. Functionally, omega-agatoxins are antagonists of voltage-sensitive calcium channels (Cav). Toxic to mice by intracerebroventricular injection. This is U17-ctenitoxin-Co1a from Ctenus ornatus (Brazilian spider).